The sequence spans 348 residues: Heat-inducible transcription repressor HrcA (348 aa).

This sequence belongs to the HrcA family.

Functionally, negative regulator of class I heat shock genes (grpE-dnaK-dnaJ and groELS operons). Prevents heat-shock induction of these operons. The protein is Heat-inducible transcription repressor HrcA of Thermodesulfovibrio yellowstonii (strain ATCC 51303 / DSM 11347 / YP87).